Reading from the N-terminus, the 630-residue chain is A-type voltage-gated potassium channel KCND2 (630 aa).

The Cytoplasmic portion of the chain corresponds to 1 to 184 (MAAGVAAWLP…FENPHTSTMA (184 aa)). The interval 2-20 (AAGVAAWLPFARAAAIGWM) is interaction with KCNIP1, KCNIP2, and other family members. T38 bears the Phosphothreonine mark. The interaction with KCNIP1 stretch occupies residues 71 to 90 (ERDFFYHPETQQYFFDRDPD). Zn(2+)-binding residues include H105, C111, C132, and C133. A helical transmembrane segment spans residues 185 to 206 (LVFYYVTGFFIAVSVIANVVET). Over 207-226 (VPCGSSPGHIKELPCGERYA) the chain is Extracellular. Residues 227-249 (VAFFCLDTACVMIFTVEYLLRLA) traverse the membrane as a helical segment. The Cytoplasmic segment spans residues 250–256 (AAPSRYR). The helical transmembrane segment at 257–281 (FVRSVMSIIDVVAILPYYIGLVMTD) threads the bilayer. At 282–287 (NEDVSG) the chain is on the extracellular side. Residues 288–307 (AFVTLRVFRVFRIFKFSRHS) form a helical; Voltage-sensor membrane-spanning segment. Topologically, residues 308–321 (QGLRILGYTLKSCA) are cytoplasmic. The S4-S5 linker stretch occupies residues 308–321 (QGLRILGYTLKSCA). A helical membrane pass occupies residues 322–345 (SELGFLLFSLTMAIIIFATVMFYA). At 346 to 357 (EKGSSASKFTSI) the chain is on the extracellular side. An intramembrane region (helical) is located at residues 358–369 (PAAFWYTIVTMT). Residues T370, L371, G372, and Y373 each coordinate K(+). A Selectivity filter motif is present at residues 370–375 (TLGYGD). The stretch at 370–377 (TLGYGDMV) is an intramembrane region. Topologically, residues 378–380 (PKT) are extracellular. A helical transmembrane segment spans residues 381–403 (IAGKIFGSICSLSGVLVIALPVP). Topologically, residues 404–630 (VIVSNFSRIY…GGNIVRVSAL (227 aa)) are cytoplasmic. The tract at residues 474 to 489 (FETQHHHLLHCLEKTT) is required for dendritic targeting. Residues 474–630 (FETQHHHLLH…GGNIVRVSAL (157 aa)) are important for normal channel activation and inactivation, for interaction with KCNIP2, and probably other family members as well. 4 positions are modified to phosphoserine: S548, S552, S572, and S575. Residues 600 to 622 (IPTPPVTTPEGDDRPESPEYSGG) are disordered. T602 and T607 each carry phosphothreonine. S616 carries the post-translational modification Phosphoserine. Positions 627–630 (VSAL) match the PDZ-binding motif.

Belongs to the potassium channel family. D (Shal) (TC 1.A.1.2) subfamily. Kv4.2/KCND2 sub-subfamily. In terms of assembly, homotetramer or heterotetramer with KCND1 or KCND3. Associates with the regulatory subunits KCNIP2, KCNIP3 and KCNIP4. Interacts with the regulatory subunit KCNIP1; this interaction mediates the capture of both the N- and C-terminus of KCND2, preventing N-type inactivation and stabilizing the S6 conformation, thereby accelerating closed state inactivation and recovery. In vivo, probably exists as heteromeric complex containing variable proportions of KCND1, KCND2, KCND3, KCNIP1, KCNIP2, KCNIP3, KCNIP4, DPP6 and DPP10. The tetrameric channel can associate with up to four regulatory subunits, such as KCNIP2 or KCNIP4. Interaction with four KCNIP4 chains does not reduce interaction with DPP10. Interacts with DLG4 and NCS1/FREQ. Interacts with DLG1. Probably part of a complex consisting of KCNIP1, KCNIP2 isoform 3 and KCND2. Interacts with FLNA, FLNC and DPP10. Identified in a complex with cAMP-dependent protein kinase (PKA), CAV3, AKAP6 and KCND3 in cardiac myocytes. Interacts (via S1 and S2 helices) with DPP6; this interaction stabilizes the conformation of the S1-S2 helices and facilitates S4 conformational change, including S4 sliding up and down, thereby accelerating activation, inactivation, and recovery. Post-translationally, phosphorylation in response to MAPK activation is increased in stimulated dendrites. Interaction with KCNIP2 and DPP6 propomtes phosphorylation by PKA at Ser-552. Phosphorylation at Ser-552 has no effect on interaction with KCNIP3, but is required for the regulation of channel activity by KCNIP3. Phosphorylation at Ser-552 leads to KCND2 internalization. Phosphorylated by MAPK in response to signaling via the metabotropic glutamate receptor GRM5. Phosphorylation at Ser-616 is required for the down-regulation of neuronal A-type currents in response to signaling via GRM5.

The protein resides in the cell membrane. The protein localises to the cell projection. It is found in the dendrite. It localises to the synapse. Its subcellular location is the perikaryon. The protein resides in the postsynaptic cell membrane. The protein localises to the dendritic spine. It is found in the sarcolemma. It localises to the cell junction. Its subcellular location is the membrane. The protein resides in the caveola. The catalysed reaction is K(+)(in) = K(+)(out). Functionally, voltage-gated potassium channel that mediates transmembrane potassium transport in excitable membranes, primarily in the brain, but also in rodent heart. Mediates the major part of the dendritic A-type current I(SA) in brain neurons. This current is activated at membrane potentials that are below the threshold for action potentials. It regulates neuronal excitability, prolongs the latency before the first spike in a series of action potentials, regulates the frequency of repetitive action potential firing, shortens the duration of action potentials and regulates the back-propagation of action potentials from the neuronal cell body to the dendrites. Contributes to the regulation of the circadian rhythm of action potential firing in suprachiasmatic nucleus neurons, which regulates the circadian rhythm of locomotor activity. Functions downstream of the metabotropic glutamate receptor GRM5 and plays a role in neuronal excitability and in nociception mediated by activation of GRM5. Mediates the transient outward current I(to) in rodent heart left ventricle apex cells, but not in human heart, where this current is mediated by another family member. Forms tetrameric potassium-selective channels through which potassium ions pass in accordance with their electrochemical gradient. The channel alternates between opened and closed conformations in response to the voltage difference across the membrane. Can form functional homotetrameric channels and heterotetrameric channels that contain variable proportions of KCND2 and KCND3; channel properties depend on the type of pore-forming alpha subunits that are part of the channel. In vivo, membranes probably contain a mixture of heteromeric potassium channel complexes. Interaction with specific isoforms of the regulatory subunits KCNIP1, KCNIP2, KCNIP3 or KCNIP4 strongly increases expression at the cell surface and thereby increases channel activity; it modulates the kinetics of channel activation and inactivation, shifts the threshold for channel activation to more negative voltage values, shifts the threshold for inactivation to less negative voltages and accelerates recovery after inactivation. Likewise, interaction with DPP6 or DPP10 promotes expression at the cell membrane and regulates both channel characteristics and activity. Upon depolarization, the channel goes from a resting closed state (C state) to an activated but non-conducting state (C* state), from there, the channel may either inactivate (I state) or open (O state). In Mustela putorius furo (European domestic ferret), this protein is A-type voltage-gated potassium channel KCND2.